Reading from the N-terminus, the 1070-residue chain is DNA-directed RNA polymerase subunit beta (1070 aa).

This sequence belongs to the RNA polymerase beta chain family. In plastids the minimal PEP RNA polymerase catalytic core is composed of four subunits: alpha, beta, beta', and beta''. When a (nuclear-encoded) sigma factor is associated with the core the holoenzyme is formed, which can initiate transcription.

Its subcellular location is the plastid. It localises to the chloroplast. The enzyme catalyses RNA(n) + a ribonucleoside 5'-triphosphate = RNA(n+1) + diphosphate. DNA-dependent RNA polymerase catalyzes the transcription of DNA into RNA using the four ribonucleoside triphosphates as substrates. This chain is DNA-directed RNA polymerase subunit beta, found in Buxus microphylla (Littleleaf boxwood).